The following is a 119-amino-acid chain: Class I hydrophobin 2 (119 aa).

The signal sequence occupies residues 1–22; the sequence is MFARISTIITTLFFAMLAAATA. Intrachain disulfides connect Cys-36–Cys-97, Cys-45–Cys-91, Cys-46–Cys-79, and Cys-98–Cys-112.

Belongs to the fungal hydrophobin family. Self-assembles to form functional amyloid fibrils called rodlets. Self-assembly into fibrillar rodlets occurs spontaneously at hydrophobic:hydrophilic interfaces and the rodlets further associate laterally to form amphipathic monolayers.

The protein resides in the secreted. It localises to the cell wall. Aerial growth, conidiation, and dispersal of filamentous fungi in the environment rely upon a capability of their secreting small amphipathic proteins called hydrophobins (HPBs) with low sequence identity. Class I can self-assemble into an outermost layer of rodlet bundles on aerial cell surfaces, conferring cellular hydrophobicity that supports fungal growth, development and dispersal; whereas Class II form highly ordered films at water-air interfaces through intermolecular interactions but contribute nothing to the rodlet structure. Abh2 is a class I hydrophobin involved in the emergence of aerial hyphae and strands. The polypeptide is Class I hydrophobin 2 (Agaricus bisporus (White button mushroom)).